The primary structure comprises 696 residues: uncharacterized protein (696 aa).

The GGDEF domain occupies 293–426 (SVLGLVLLGF…GSRQYCFYEE (134 aa)). An EAL domain is found at 435–689 (RIQLEHALHQ…EITAFLAEGN (255 aa)).

This is an uncharacterized protein from Synechocystis sp. (strain ATCC 27184 / PCC 6803 / Kazusa).